A 98-amino-acid polypeptide reads, in one-letter code: C-X-C motif chemokine 10 (98 aa).

The N-terminal stretch at 1-21 is a signal peptide; that stretch reads MNQTAILICCLIFLTLSGIQG. A Citrulline; by PAD2 modification is found at R26. 2 disulfides stabilise this stretch: C30–C57 and C32–C74.

It belongs to the intercrine alpha (chemokine CxC) family. As to quaternary structure, monomer, dimer, and tetramer. Interacts with CXCR3 (via N-terminus). In terms of processing, several proteases can mediate post-secretion cleavages. DPP4 cleaves CXCL10 on its N-terminal 2 amino acids leading to an antagonist form of CXCL10. This dominant negative form is capable of binding CXCR3 but does not induce signaling. MMP9 cleaves 9 amino acids instead. Mainly secreted by monocytes, endothelial cells as well as fibroblasts. Expressed by epithelial cells in thymus. Microglial cells produce CXCL10 in response to viral stimulation.

Its subcellular location is the secreted. Functionally, pro-inflammatory cytokine that is involved in a wide variety of processes such as chemotaxis, differentiation, and activation of peripheral immune cells, regulation of cell growth, apoptosis and modulation of angiostatic effects. Plays thereby an important role during viral infections by stimulating the activation and migration of immune cells to the infected sites. Mechanistically, binding of CXCL10 to the CXCR3 receptor activates G protein-mediated signaling and results in downstream activation of phospholipase C-dependent pathway, an increase in intracellular calcium production and actin reorganization. In turn, recruitment of activated Th1 lymphocytes occurs at sites of inflammation. Activation of the CXCL10/CXCR3 axis also plays an important role in neurons in response to brain injury for activating microglia, the resident macrophage population of the central nervous system, and directing them to the lesion site. This recruitment is an essential element for neuronal reorganization. This chain is C-X-C motif chemokine 10 (CXCL10), found in Homo sapiens (Human).